Here is a 557-residue protein sequence, read N- to C-terminus: Copine-6 (557 aa).

2 C2 domains span residues 2-127 (SDPE…TKPL) and 134-263 (TAGK…MQWD). Ca(2+) is bound by residues Asp-167, Asp-173, Asp-229, Asp-231, and Asp-237. Residues 244–303 (STFQEMQEGTANPGQEMQWDCINPKYRDKKKNYKSSGTVVLAQCTVEKVHTFLDYIMGGC) form a linker region region. The region spanning 306–526 (SFTVAIDFTA…ALAKRVLAEV (221 aa)) is the VWFA domain.

Belongs to the copine family. As to quaternary structure, interacts (via second C2 domain) with OS9 (via C-terminus); this interaction occurs in a calcium-dependent manner in vitro. May interact with NECAB1. It depends on Ca(2+) as a cofactor.

The protein localises to the cytoplasm. Its subcellular location is the cell membrane. The protein resides in the endosome. It localises to the cytoplasmic vesicle. It is found in the clathrin-coated vesicle. The protein localises to the perikaryon. Its subcellular location is the cell projection. The protein resides in the dendrite. In terms of biological role, calcium-dependent phospholipid-binding protein that plays a role in calcium-mediated intracellular processes. Binds phospholipid membranes in a calcium-dependent manner. Plays a role in dendrite formation by melanocytes. In Pongo abelii (Sumatran orangutan), this protein is Copine-6.